The chain runs to 432 residues: Pachytene checkpoint protein 2 homolog (432 aa).

Residue M1 is modified to N-acetylmethionine. Position 179-186 (179-186) interacts with ATP; sequence GPPGTGKT.

It belongs to the AAA ATPase family. PCH2 subfamily. In terms of assembly, specifically interacts with the ligand binding domain of the thyroid receptor (TR). This interaction does not require the presence of thyroid hormone for its interaction. Interacts with proteasome subunit PSMA8; to participate in meiosis progression during spermatogenesis.

Its function is as follows. Plays a key role in chromosome recombination and chromosome structure development during meiosis. Required at early steps in meiotic recombination that leads to non-crossovers pathways. Also needed for efficient completion of homologous synapsis by influencing crossover distribution along the chromosomes affecting both crossovers and non-crossovers pathways. Also required for development of higher-order chromosome structures and is needed for synaptonemal-complex formation. In males, required for efficient synapsis of the sex chromosomes and for sex body formation. Promotes early steps of the DNA double-strand breaks (DSBs) repair process upstream of the assembly of RAD51 complexes. Required for depletion of HORMAD1 and HORMAD2 from synapsed chromosomes. The sequence is that of Pachytene checkpoint protein 2 homolog (TRIP13) from Canis lupus familiaris (Dog).